A 531-amino-acid polypeptide reads, in one-letter code: Peptide chain release factor 3 (531 aa).

A tr-type G domain is found at 11–280; it reads GRRRTFAIIS…AFIRFASRPG (270 aa). Residues 20 to 27, 88 to 92, and 142 to 145 each bind GTP; these read SHPDAGKT, DTPGH, and NKLD.

This sequence belongs to the TRAFAC class translation factor GTPase superfamily. Classic translation factor GTPase family. PrfC subfamily.

The protein resides in the cytoplasm. Its function is as follows. Increases the formation of ribosomal termination complexes and stimulates activities of RF-1 and RF-2. It binds guanine nucleotides and has strong preference for UGA stop codons. It may interact directly with the ribosome. The stimulation of RF-1 and RF-2 is significantly reduced by GTP and GDP, but not by GMP. This chain is Peptide chain release factor 3, found in Gloeobacter violaceus (strain ATCC 29082 / PCC 7421).